The primary structure comprises 342 residues: S-adenosylmethionine:tRNA ribosyltransferase-isomerase (342 aa).

It belongs to the QueA family. Monomer.

The protein localises to the cytoplasm. It carries out the reaction 7-aminomethyl-7-carbaguanosine(34) in tRNA + S-adenosyl-L-methionine = epoxyqueuosine(34) in tRNA + adenine + L-methionine + 2 H(+). The protein operates within tRNA modification; tRNA-queuosine biosynthesis. Transfers and isomerizes the ribose moiety from AdoMet to the 7-aminomethyl group of 7-deazaguanine (preQ1-tRNA) to give epoxyqueuosine (oQ-tRNA). In Bacillus licheniformis (strain ATCC 14580 / DSM 13 / JCM 2505 / CCUG 7422 / NBRC 12200 / NCIMB 9375 / NCTC 10341 / NRRL NRS-1264 / Gibson 46), this protein is S-adenosylmethionine:tRNA ribosyltransferase-isomerase.